We begin with the raw amino-acid sequence, 452 residues long: Protein phosphatase 1F (452 aa).

The 258-residue stretch at 153–410 (LVSIHAIRNT…DNITVMVVFL (258 aa)) folds into the PPM-type phosphatase domain. Mn(2+) contacts are provided by Asp-195, Gly-196, Asp-357, and Asp-401. A Phosphoserine modification is found at Ser-452.

This sequence belongs to the PP2C family. Associates with FEM1B. Requires Mg(2+) as cofactor. Mn(2+) serves as cofactor. In terms of tissue distribution, expressed in the liver.

The catalysed reaction is O-phospho-L-seryl-[protein] + H2O = L-seryl-[protein] + phosphate. The enzyme catalyses O-phospho-L-threonyl-[protein] + H2O = L-threonyl-[protein] + phosphate. Its function is as follows. Dephosphorylates and concomitantly deactivates CaM-kinase II activated upon autophosphorylation, and CaM-kinases IV and I activated upon phosphorylation by CaM-kinase kinase. Promotes apoptosis. The polypeptide is Protein phosphatase 1F (Ppm1f) (Mus musculus (Mouse)).